A 473-amino-acid polypeptide reads, in one-letter code: Aspartyl/glutamyl-tRNA(Asn/Gln) amidotransferase subunit B (473 aa).

It belongs to the GatB/GatE family. GatB subfamily. As to quaternary structure, heterotrimer of A, B and C subunits.

It catalyses the reaction L-glutamyl-tRNA(Gln) + L-glutamine + ATP + H2O = L-glutaminyl-tRNA(Gln) + L-glutamate + ADP + phosphate + H(+). It carries out the reaction L-aspartyl-tRNA(Asn) + L-glutamine + ATP + H2O = L-asparaginyl-tRNA(Asn) + L-glutamate + ADP + phosphate + 2 H(+). Functionally, allows the formation of correctly charged Asn-tRNA(Asn) or Gln-tRNA(Gln) through the transamidation of misacylated Asp-tRNA(Asn) or Glu-tRNA(Gln) in organisms which lack either or both of asparaginyl-tRNA or glutaminyl-tRNA synthetases. The reaction takes place in the presence of glutamine and ATP through an activated phospho-Asp-tRNA(Asn) or phospho-Glu-tRNA(Gln). The polypeptide is Aspartyl/glutamyl-tRNA(Asn/Gln) amidotransferase subunit B (Levilactobacillus brevis (strain ATCC 367 / BCRC 12310 / CIP 105137 / JCM 1170 / LMG 11437 / NCIMB 947 / NCTC 947) (Lactobacillus brevis)).